Here is a 105-residue protein sequence, read N- to C-terminus: Class I hydrophobin 1 (105 aa).

Residues 1-18 (MAFIKSLLIASVAAVAFA) form the signal peptide. 4 disulfides stabilise this stretch: Cys-42-Cys-83, Cys-50-Cys-76, Cys-51-Cys-62, and Cys-84-Cys-100.

Belongs to the fungal hydrophobin family. In terms of assembly, self-assembles to form functional amyloid fibrils called rodlets. Self-assembly into fibrillar rodlets occurs spontaneously at hydrophobic:hydrophilic interfaces and the rodlets further associate laterally to form amphipathic monolayers.

Its subcellular location is the secreted. It is found in the cell wall. In terms of biological role, aerial growth, conidiation, and dispersal of filamentous fungi in the environment rely upon a capability of their secreting small amphipathic proteins called hydrophobins (HPBs) with low sequence identity. Class I can self-assemble into an outermost layer of rodlet bundles on aerial cell surfaces, conferring cellular hydrophobicity that supports fungal growth, development and dispersal; whereas Class II form highly ordered films at water-air interfaces through intermolecular interactions but contribute nothing to the rodlet structure. The sequence is that of Class I hydrophobin 1 from Davidiella tassiana (Mycosphaerella tassiana).